The sequence spans 169 residues: U3 small nucleolar ribonucleoprotein protein imp3 (169 aa).

The 58-residue stretch at 109-166 (RRLPVVMCRLKMCETVSTSVKYVEHGHVRVGPEVITDPAFFVTRNMEDFVTWVDSSKI) folds into the S4 RNA-binding domain.

This sequence belongs to the universal ribosomal protein uS4 family. As to quaternary structure, component of a heterotrimeric complex containing imp3, imp4 and mpp10.

It is found in the nucleus. The protein resides in the nucleolus. Functionally, component of the U3 small nucleolar ribonucleoprotein. Required for the early cleavages at sites A0, A1 and A2 during 18S ribosomal pre-RNA processing. The protein is U3 small nucleolar ribonucleoprotein protein imp3 (RBP) of Pneumocystis carinii.